An 803-amino-acid polypeptide reads, in one-letter code: Subtilisin-like protease SBT5.5 (803 aa).

Residues M1–A22 form the signal peptide. Residues S23–H112 constitute a propeptide, activation peptide. One can recognise an Inhibitor I9 domain in the interval V30–K108. One can recognise a Peptidase S8 domain in the interval K140–A656. Residue D169 is the Charge relay system of the active site. N-linked (GlcNAc...) asparagine glycosylation is present at N202. H244 serves as the catalytic Charge relay system. The PA domain maps to Y409–L504. The active-site Charge relay system is the S589. N-linked (GlcNAc...) asparagine glycosylation occurs at N725.

The protein belongs to the peptidase S8 family.

It localises to the secreted. The chain is Subtilisin-like protease SBT5.5 from Arabidopsis thaliana (Mouse-ear cress).